We begin with the raw amino-acid sequence, 90 residues long: uncharacterized protein (90 aa).

A helical transmembrane segment spans residues 12–32; it reads VVGGLSFWSFSAGVIMIVNAF.

It localises to the membrane. This is an uncharacterized protein from Mycoplasma pneumoniae (strain ATCC 29342 / M129 / Subtype 1) (Mycoplasmoides pneumoniae).